The primary structure comprises 319 residues: MARKKITLVGAGNIGGTLAHLALIKQLGDVVLFDIAQGMPNGKALDLLQTCPIEGVDFKVRGTNDYKDLENSDVVIVTAGVPRKPGMSRDDLLGINIKVMQTVGEGIKHNCPNAFVICITNPLDIMVNMLQKFSGVPDNKIVGMAGVLDSARFRTFLADELNVSVQQVQAYVMGGHGDTMVPLTKMSNVAGVSLEQLVKEGKLKQERLDAIVSRTRSGGGEIVALLKTGSAYYAPAAAGIQMAESFLKDKKMILPCAAKVKAGMYGLDEDLFVGVPTEISANGVRPIEVEISDKEREQLQVSINAVKDLNKAAAEILAK.

NAD(+)-binding positions include 10–15 and Asp34; that span reads GAGNIG. The substrate site is built by Arg83 and Arg89. Residues Asn96 and 119–121 each bind NAD(+); that span reads ITN. Substrate is bound by residues Asn121 and Arg152. His176 functions as the Proton acceptor in the catalytic mechanism.

This sequence belongs to the LDH/MDH superfamily. MDH type 3 family.

It carries out the reaction (S)-malate + NAD(+) = oxaloacetate + NADH + H(+). Functionally, catalyzes the reversible oxidation of malate to oxaloacetate. The polypeptide is Malate dehydrogenase (Francisella tularensis subsp. holarctica (strain FTNF002-00 / FTA)).